We begin with the raw amino-acid sequence, 108 residues long: UPF0102 protein WS0451 (108 aa).

The protein belongs to the UPF0102 family.

This Wolinella succinogenes (strain ATCC 29543 / DSM 1740 / CCUG 13145 / JCM 31913 / LMG 7466 / NCTC 11488 / FDC 602W) (Vibrio succinogenes) protein is UPF0102 protein WS0451.